A 532-amino-acid polypeptide reads, in one-letter code: 56 kDa type-specific antigen (532 aa).

The N-terminal stretch at 1–22 (MKKIMLIASAMSALSLPFSASA) is a signal peptide. Residues 67 to 87 (TNGLPFGGTLAAGMTIAPGFR) traverse the membrane as a helical segment. The interval 401–428 (QEEDAKNQGEGDCKQQQGTSEKSKKGKD) is disordered. Residues 403–413 (EDAKNQGEGDC) are compositionally biased toward basic and acidic residues. The chain crosses the membrane as a helical span at residues 480–500 (TGMVASGALGVAINAAEGVYV).

It is found in the cell membrane. Its function is as follows. May be an adherent factor for rickettsial adsorption to the host-cell surface and a determinant of virulence of individual rickettsial strain. It is the major outer membrane protein. The sequence is that of 56 kDa type-specific antigen from Orientia tsutsugamushi (Rickettsia tsutsugamushi).